Here is a 644-residue protein sequence, read N- to C-terminus: Sodium/hydrogen exchanger 9 (644 aa).

The Lumenal portion of the chain corresponds to 1–20 (MERQRRFMSEKDEYQFQHQG). The helical transmembrane segment at 21 to 41 (AVELLVFNFLLILTILTIWLF) threads the bilayer. Over 42 to 45 (KNHR) the chain is Cytoplasmic. A helical membrane pass occupies residues 46 to 66 (FRFLHETGGAMVYGLIMGLIL). Over 67 to 126 (RYATAPTDIESGTVYDCGKLAFSPSTLLINITDQVYEYKYKREISQHNINPHLGNAILEK) the chain is Lumenal. Residues 127 to 147 (MTFDPEIFFNVLLPPIIFHAG) form a helical membrane-spanning segment. Topologically, residues 148-164 (YSLKKRHFFQNLGSILT) are cytoplasmic. The helical transmembrane segment at 165-185 (YAFLGTAISCIVIGLIMYGFV) threads the bilayer. Residues 186–203 (KAMVYAGQLKNGDFHFTD) lie on the Lumenal side of the membrane. Residues 204 to 224 (CLFFGSLMSATDPVTVLAIFH) traverse the membrane as a helical segment. At 225-235 (ELHVDPDLYTL) the chain is on the cytoplasmic side. The helical transmembrane segment at 236 to 256 (LFGESVLNDAVAIVLTYSISI) threads the bilayer. At 257–277 (YSPKENPNAFDAAAFFQSVGN) the chain is on the lumenal side. A helical membrane pass occupies residues 278 to 298 (FLGIFAGSFAMGSAYAVVTAL). At 299–301 (LTK) the chain is on the cytoplasmic side. 2 helical membrane-spanning segments follow: residues 302–322 (FTKL…LSWS) and 323–343 (AFLS…FCGV). Residues 344-364 (TQAHYTYNNLSLDSKMRTKQL) lie on the Cytoplasmic side of the membrane. A helical transmembrane segment spans residues 365 to 385 (FEFMNFLAENVIFCYMGLALF). Residue Thr-386 is a topological domain, lumenal. A helical transmembrane segment spans residues 387–407 (FQNHIFNALFILGAFLAIFVA). The Cytoplasmic segment spans residues 408 to 429 (RACNIYPLSFLLNLGRKHKIPW). The helical transmembrane segment at 430–450 (NFQHMMMFSGLRGAIAFALAI) threads the bilayer. Topologically, residues 451 to 465 (RDTESQPKQMMFSTT) are lumenal. The helical transmembrane segment at 466–486 (LLLVFFTVWVFGGGTTPMLTW) threads the bilayer. The Cytoplasmic segment spans residues 487 to 644 (LQIRVGVDLD…EQTPGQSQLN (158 aa)). The disordered stretch occupies residues 593 to 622 (QAASPCSPPTRLGLDQKAAPQTPGKENIYE).

This sequence belongs to the monovalent cation:proton antiporter 1 (CPA1) transporter (TC 2.A.36) family. As to quaternary structure, homodimer; phosphatidylinositol-4,5-bisphosphate (PIP2) and phosphatidylinositol 3,4,5-trisphosphate (PIP3) could be involved in the dimer stabilization. Interacts (via the C-terminus) with RACK1. Interacts with CHP1.

Its subcellular location is the late endosome membrane. The protein localises to the early endosome membrane. It is found in the recycling endosome membrane. The protein resides in the cell membrane. It localises to the cytoplasmic vesicle. Its subcellular location is the phagosome membrane. The enzyme catalyses Na(+)(in) + H(+)(out) = Na(+)(out) + H(+)(in). The catalysed reaction is K(+)(in) + H(+)(out) = K(+)(out) + H(+)(in). Endosomal Na(+), K(+)/H(+) antiporter. Mediates the electroneutral exchange of endosomal luminal H(+) for a cytosolic Na(+) or K(+). By facilitating proton efflux, SLC9A9 counteracts the acidity generated by vacuolar (V)-ATPase, thereby limiting luminal acidification. Regulates organellar pH and consequently, endosome maturation and endocytic trafficking of plasma membrane receptors and neurotransporters. Promotes the recycling of transferrin receptors back to the cell surface to facilitate additional iron uptake in the brain. Regulates synaptic transmission by regulating the luminal pH of axonal endosomes. Regulates phagosome lumenal pH, thus affecting phagosome maturation, and consequently, microbicidal activity in macrophages. Can also be active at the cell surface of specialized cells, e.g., in the inner ear hair bundles uses the high K(+) of the endolymph to regulate intracelular pH. The sequence is that of Sodium/hydrogen exchanger 9 (SLC9A9) from Equus caballus (Horse).